The primary structure comprises 377 residues: Dehydrogenase/reductase SDR family member 13 (377 aa).

Positions methionine 1–alanine 25 are cleaved as a signal peptide. Residues serine 46 and isoleucine 48 each coordinate NAD(+). Substrate is bound at residue serine 170. NAD(+) contacts are provided by tyrosine 197, lysine 201, and serine 232. Residue tyrosine 197 is the Proton acceptor of the active site. Positions leucine 310–threonine 363 are disordered. Residues glutamate 317–proline 327 show a composition bias toward acidic residues. Positions glutamate 328 to serine 337 are enriched in low complexity. A compositionally biased stretch (polar residues) spans serine 352–threonine 363.

Belongs to the short-chain dehydrogenases/reductases (SDR) family.

It is found in the secreted. Its function is as follows. Putative oxidoreductase. In Bos taurus (Bovine), this protein is Dehydrogenase/reductase SDR family member 13 (DHRS13).